Reading from the N-terminus, the 116-residue chain is Small ribosomal subunit protein uS13m (116 aa).

The tract at residues 92–116 (HQDGSPLRGQRTHTNARTARKQIRK) is disordered.

It belongs to the universal ribosomal protein uS13 family. Part of the small ribosomal subunit.

It localises to the mitochondrion. Its function is as follows. Located at the top of the head of the small subunit, it contacts several helices of the 18S rRNA. In Triticum aestivum (Wheat), this protein is Small ribosomal subunit protein uS13m (RPS13).